Reading from the N-terminus, the 229-residue chain is Potassium/proton antiporter CemA (229 aa).

A run of 3 helical transmembrane segments spans residues 7 to 27 (LTPF…SLSF), 106 to 126 (IVLH…YYFL), and 189 to 209 (IISG…KYWI).

The protein belongs to the CemA family.

The protein resides in the plastid. Its subcellular location is the chloroplast inner membrane. The enzyme catalyses K(+)(in) + H(+)(out) = K(+)(out) + H(+)(in). Its function is as follows. Contributes to K(+)/H(+) antiport activity by supporting proton efflux to control proton extrusion and homeostasis in chloroplasts in a light-dependent manner to modulate photosynthesis. Prevents excessive induction of non-photochemical quenching (NPQ) under continuous-light conditions. Indirectly promotes efficient inorganic carbon uptake into chloroplasts. This chain is Potassium/proton antiporter CemA, found in Calycanthus floridus var. glaucus (Eastern sweetshrub).